The primary structure comprises 97 residues: UPF0235 protein HAPS_1504 (97 aa).

The protein belongs to the UPF0235 family.

In Glaesserella parasuis serovar 5 (strain SH0165) (Haemophilus parasuis), this protein is UPF0235 protein HAPS_1504.